A 198-amino-acid polypeptide reads, in one-letter code: Recombination protein RecR (198 aa).

Residues 56–71 (CKVCGNFSEEDECVIC) form a C4-type zinc finger. Residues 79-174 (GVICVVEEPK…RVSKLASGLP (96 aa)) enclose the Toprim domain.

The protein belongs to the RecR family.

Functionally, may play a role in DNA repair. It seems to be involved in an RecBC-independent recombinational process of DNA repair. It may act with RecF and RecO. The sequence is that of Recombination protein RecR from Tropheryma whipplei (strain TW08/27) (Whipple's bacillus).